Consider the following 94-residue polypeptide: Small ribosomal subunit protein uS19 (94 aa).

Residues 75–94 (SHTRTFKGHAGDKKAAGSKR) are disordered. The span at 83 to 94 (HAGDKKAAGSKR) shows a compositional bias: basic and acidic residues.

The protein belongs to the universal ribosomal protein uS19 family.

Functionally, protein S19 forms a complex with S13 that binds strongly to the 16S ribosomal RNA. This chain is Small ribosomal subunit protein uS19, found in Nitrosomonas europaea (strain ATCC 19718 / CIP 103999 / KCTC 2705 / NBRC 14298).